The primary structure comprises 89 residues: UPF0223 protein Bcer98_2663 (89 aa).

Belongs to the UPF0223 family.

This Bacillus cytotoxicus (strain DSM 22905 / CIP 110041 / 391-98 / NVH 391-98) protein is UPF0223 protein Bcer98_2663.